Reading from the N-terminus, the 145-residue chain is D-aminoacyl-tRNA deacylase (145 aa).

The Gly-cisPro motif, important for rejection of L-amino acids signature appears at 137–138 (GP).

This sequence belongs to the DTD family. Homodimer.

Its subcellular location is the cytoplasm. It catalyses the reaction glycyl-tRNA(Ala) + H2O = tRNA(Ala) + glycine + H(+). The enzyme catalyses a D-aminoacyl-tRNA + H2O = a tRNA + a D-alpha-amino acid + H(+). Its function is as follows. An aminoacyl-tRNA editing enzyme that deacylates mischarged D-aminoacyl-tRNAs. Also deacylates mischarged glycyl-tRNA(Ala), protecting cells against glycine mischarging by AlaRS. Acts via tRNA-based rather than protein-based catalysis; rejects L-amino acids rather than detecting D-amino acids in the active site. By recycling D-aminoacyl-tRNA to D-amino acids and free tRNA molecules, this enzyme counteracts the toxicity associated with the formation of D-aminoacyl-tRNA entities in vivo and helps enforce protein L-homochirality. The sequence is that of D-aminoacyl-tRNA deacylase from Francisella tularensis subsp. holarctica (strain FTNF002-00 / FTA).